The chain runs to 299 residues: Delta-9 desaturase-like 1 protein (299 aa).

2 helical membrane passes run 31–51 (IDIARASAVGAVHLLCLLAPF) and 55–75 (WEALRFGVILAIVTSLSITFS). A Histidine box-1 motif is present at residues 77-82 (HRNLTH). Residues 114-118 (HRFHH) carry the Histidine box-2 motif. 2 helical membrane-spanning segments follow: residues 174–194 (IGLHILTFWTLVYLWGGLPYL) and 198–218 (VGVGGTIGYNGTWLINSACHI). Residues 246–250 (HNNHH) carry the Histidine box-3 motif. The chain crosses the membrane as a helical span at residues 262 to 282 (WYQVDLTWYLICFFQALGLAT).

The protein belongs to the fatty acid desaturase type 1 family. Fe cation serves as cofactor.

It is found in the endoplasmic reticulum membrane. It functions in the pathway lipid metabolism; polyunsaturated fatty acid biosynthesis. This Arabidopsis thaliana (Mouse-ear cress) protein is Delta-9 desaturase-like 1 protein.